A 367-amino-acid polypeptide reads, in one-letter code: Glutamate 5-kinase (367 aa).

Lys-10 contributes to the ATP binding site. 3 residues coordinate substrate: Ser-50, Asp-137, and Asn-149. ATP contacts are provided by residues 169 to 170 (TD) and 211 to 217 (TGGMATK). The PUA domain maps to 275 to 353 (AGEITVDDGA…QQISEILGYE (79 aa)).

The protein belongs to the glutamate 5-kinase family.

The protein resides in the cytoplasm. The catalysed reaction is L-glutamate + ATP = L-glutamyl 5-phosphate + ADP. The protein operates within amino-acid biosynthesis; L-proline biosynthesis; L-glutamate 5-semialdehyde from L-glutamate: step 1/2. In terms of biological role, catalyzes the transfer of a phosphate group to glutamate to form L-glutamate 5-phosphate. The chain is Glutamate 5-kinase from Yersinia pseudotuberculosis serotype IB (strain PB1/+).